A 148-amino-acid polypeptide reads, in one-letter code: UPF0260 protein ECA2365 (148 aa).

The protein belongs to the UPF0260 family.

The chain is UPF0260 protein ECA2365 from Pectobacterium atrosepticum (strain SCRI 1043 / ATCC BAA-672) (Erwinia carotovora subsp. atroseptica).